A 352-amino-acid chain; its full sequence is Beta-1,4-xylanase (352 aa).

The signal sequence occupies residues 1 to 23; that stretch reads MINQRFSILVLLLILLTFSLGFL. One can recognise a GH10 domain in the interval 29–352; sequence GMEIPSLKEV…KKAFWEIVKF (324 aa). Residue Glu-155 is the Proton donor of the active site. The Nucleophile role is filled by Glu-262.

Belongs to the glycosyl hydrolase 10 (cellulase F) family.

The protein localises to the secreted. It catalyses the reaction Endohydrolysis of (1-&gt;4)-beta-D-xylosidic linkages in xylans.. The protein operates within glycan degradation; xylan degradation. In Dictyoglomus thermophilum, this protein is Beta-1,4-xylanase (xynA).